Here is a 497-residue protein sequence, read N- to C-terminus: Cytoplasmic dynein 1 light intermediate chain 2 (497 aa).

61–68 is a binding site for ATP; sequence GEDGSGKT. 4 disordered regions span residues 187-206, 366-408, 423-461, and 474-497; these read PEEG…SGSD, QQES…IKNN, LSKK…TEQC, and QEEL…ENEA. Ser194, Ser369, and Ser377 each carry phosphoserine. Arg383 is modified (omega-N-methylarginine). The segment covering 423–444 has biased composition (polar residues); that stretch reads LSKKTGSPGSPSAGGVQSTAKK. At Thr427 the chain carries Phosphothreonine. Phosphoserine occurs at positions 429 and 432. Positions 476-485 are enriched in basic and acidic residues; sequence ELDRMTRKPD. The span at 487–497 shows a compositional bias: polar residues; that stretch reads MVTNSSTENEA.

The protein belongs to the dynein light intermediate chain family. As to quaternary structure, homodimer. The cytoplasmic dynein 1 complex consists of two catalytic heavy chains (HCs) and a number of non-catalytic subunits presented by intermediate chains (ICs), light intermediate chains (LICs) and light chains (LCs); the composition seems to vary in respect to the IC, LIC and LC composition. The heavy chain homodimer serves as a scaffold for the probable homodimeric assembly of the respective non-catalytic subunits. The ICs and LICs bind directly to the HC dimer and the LCs assemble on the IC dimer. Self-associates. Interacts with DYNC1H1; DYNC1LI1 and DYNC1LI2 bind mutually exclusive to DYNC1H1. As to expression, ubiquitous.

The protein resides in the cytoplasm. Its subcellular location is the cytoskeleton. Acts as one of several non-catalytic accessory components of the cytoplasmic dynein 1 complex that are thought to be involved in linking dynein to cargos and to adapter proteins that regulate dynein function. Cytoplasmic dynein 1 acts as a motor for the intracellular retrograde motility of vesicles and organelles along microtubules. May play a role in binding dynein to membranous organelles or chromosomes. The chain is Cytoplasmic dynein 1 light intermediate chain 2 (Dync1li2) from Rattus norvegicus (Rat).